The sequence spans 168 residues: Large ribosomal subunit protein uL10 (168 aa).

This sequence belongs to the universal ribosomal protein uL10 family. In terms of assembly, part of the ribosomal stalk of the 50S ribosomal subunit. The N-terminus interacts with L11 and the large rRNA to form the base of the stalk. The C-terminus forms an elongated spine to which L12 dimers bind in a sequential fashion forming a multimeric L10(L12)X complex.

Functionally, forms part of the ribosomal stalk, playing a central role in the interaction of the ribosome with GTP-bound translation factors. The protein is Large ribosomal subunit protein uL10 (rplJ) of Buchnera aphidicola subsp. Baizongia pistaciae (strain Bp).